A 677-amino-acid polypeptide reads, in one-letter code: mRNA 3'-end-processing protein RNA14 (677 aa).

HAT repeat units lie at residues 56–88 (ESYAKVREVYEQFHNTFPFYSPAWTLQLKGELA), 90–124 (DEFETVEKILAQCLSGKLENNDLSLWSTYLDYIRR), 138–170 (VIVKAFQLVMQKCAIFEPKSSSFWNEYLNFLEQ), 181–214 (QRIDMLREFYKKMLCVPFDNLEKMWNRYTQWEQE), 257–289 (RTANKKNIPQPGTSDSNIQQLQIWLNWIKWERE), and 298–330 (MLSQRISYVYKQGIQYMIFSAEMWYDYSMYISE).

Component of the CFIA complex, which is composed of RNA14, RNA15, PCF11 and CLP1. Interacts with FIP1, PFS2, YSH1 and probably also with RNA15. Probably interacts with the phosphorylated CTD domain of RPB1/RNA polymerase II.

Its subcellular location is the nucleus. The protein localises to the cytoplasm. Component of the cleavage factor IA (CFIA) complex, which is involved in the endonucleolytic cleavage during polyadenylation-dependent pre-mRNA 3'-end formation and cooperates with the cleavage factor NAB4/CFIB and the cleavage and polyadenylation factor (CPF) complex. This is mRNA 3'-end-processing protein RNA14 (RNA14) from Saccharomyces cerevisiae (strain ATCC 204508 / S288c) (Baker's yeast).